Reading from the N-terminus, the 114-residue chain is Fluoride-specific ion channel FluC 1 (114 aa).

3 helical membrane passes run 28-48, 56-76, and 91-111; these read VFPW…GFLH, ILLL…TFQV, and IIYL…GSWL. Na(+)-binding residues include glycine 66 and threonine 69.

Belongs to the fluoride channel Fluc/FEX (TC 1.A.43) family.

The protein localises to the cell membrane. The enzyme catalyses fluoride(in) = fluoride(out). With respect to regulation, na(+) is not transported, but it plays an essential structural role and its presence is essential for fluoride channel function. Fluoride-specific ion channel. Important for reducing fluoride concentration in the cell, thus reducing its toxicity. The protein is Fluoride-specific ion channel FluC 1 of Ligilactobacillus salivarius (strain UCC118) (Lactobacillus salivarius).